A 206-amino-acid chain; its full sequence is 3-isopropylmalate dehydratase small subunit (206 aa).

It belongs to the LeuD family. LeuD type 1 subfamily. Heterodimer of LeuC and LeuD.

It catalyses the reaction (2R,3S)-3-isopropylmalate = (2S)-2-isopropylmalate. Its pathway is amino-acid biosynthesis; L-leucine biosynthesis; L-leucine from 3-methyl-2-oxobutanoate: step 2/4. Its function is as follows. Catalyzes the isomerization between 2-isopropylmalate and 3-isopropylmalate, via the formation of 2-isopropylmaleate. This is 3-isopropylmalate dehydratase small subunit from Leptospira borgpetersenii serovar Hardjo-bovis (strain JB197).